A 713-amino-acid chain; its full sequence is Polyribonucleotide nucleotidyltransferase (713 aa).

Mg(2+) contacts are provided by D493 and D499. One can recognise a KH domain in the interval 560–619 (PRMITIKINPEKIRDVIGKGGSVIRALTEETGTTIDISDDGVVTIASTNSEGMAEAKKRI). The region spanning 629-697 (GHVYEGTVLK…EKGRVRLSAK (69 aa)) is the S1 motif domain.

The protein belongs to the polyribonucleotide nucleotidyltransferase family. Requires Mg(2+) as cofactor.

Its subcellular location is the cytoplasm. The enzyme catalyses RNA(n+1) + phosphate = RNA(n) + a ribonucleoside 5'-diphosphate. Functionally, involved in mRNA degradation. Catalyzes the phosphorolysis of single-stranded polyribonucleotides processively in the 3'- to 5'-direction. In Burkholderia mallei (strain NCTC 10247), this protein is Polyribonucleotide nucleotidyltransferase.